The following is a 119-amino-acid chain: MPRVKRGVTARARHKKVLALAKGFRGRRGNVFRIAKQAVMKAGQYAYRDRRTKKRVFRQLWIARINAAARELGLTYSQFANGLKKAAIEIDRKMLADLAVHDKAAFGSIVEQVKARLAV.

It belongs to the bacterial ribosomal protein bL20 family.

Functionally, binds directly to 23S ribosomal RNA and is necessary for the in vitro assembly process of the 50S ribosomal subunit. It is not involved in the protein synthesizing functions of that subunit. The chain is Large ribosomal subunit protein bL20 from Verminephrobacter eiseniae (strain EF01-2).